The primary structure comprises 475 residues: Dihydrolipoyl dehydrogenase (475 aa).

FAD-binding positions include 36 to 45, Lys54, and Gly117; that span reads ERYSTLGGVC. The cysteines at positions 45 and 50 are disulfide-linked. Residues 182 to 186, Glu205, Val238, and 270 to 273 contribute to the NAD(+) site; these read GGGII and AIGR. Residues Asp313 and Ala321 each contribute to the FAD site. The active-site Proton acceptor is the His445.

It belongs to the class-I pyridine nucleotide-disulfide oxidoreductase family. It depends on FAD as a cofactor.

The protein localises to the cytoplasm. It catalyses the reaction N(6)-[(R)-dihydrolipoyl]-L-lysyl-[protein] + NAD(+) = N(6)-[(R)-lipoyl]-L-lysyl-[protein] + NADH + H(+). In terms of biological role, the branched-chain alpha-keto dehydrogenase complex catalyzes the overall conversion of alpha-keto acids to acyl-CoA and CO(2). It contains multiple copies of 3 enzymatic components: branched-chain alpha-keto acid decarboxylase (E1), lipoamide acyltransferase (E2) and lipoamide dehydrogenase (E3). This chain is Dihydrolipoyl dehydrogenase (lpd), found in Vibrio parahaemolyticus serotype O3:K6 (strain RIMD 2210633).